Consider the following 127-residue polypeptide: Large ribosomal subunit protein bL12 (127 aa).

This sequence belongs to the bacterial ribosomal protein bL12 family. In terms of assembly, homodimer. Part of the ribosomal stalk of the 50S ribosomal subunit. Forms a multimeric L10(L12)X complex, where L10 forms an elongated spine to which 2 to 4 L12 dimers bind in a sequential fashion. Binds GTP-bound translation factors.

Its function is as follows. Forms part of the ribosomal stalk which helps the ribosome interact with GTP-bound translation factors. Is thus essential for accurate translation. In Streptomyces virginiae (Streptomyces cinnamonensis), this protein is Large ribosomal subunit protein bL12.